Consider the following 261-residue polypeptide: Calbindin (261 aa).

Residue alanine 2 is modified to N-acetylalanine. The interval 2 to 7 (AESHLQ) is interaction with RANBP9. EF-hand domains are found at residues 11–46 (ITAS…LQQA), 53–88 (ELSP…EENF), 98–133 (KSCE…LLEK), 142–177 (KLAE…QENF), and 186–221 (MCGK…LCEK). Ca(2+) contacts are provided by aspartate 24, aspartate 26, serine 28, tyrosine 30, and glutamate 35. Residues aspartate 111, aspartate 113, glutamate 122, aspartate 155, asparagine 157, aspartate 159, lysine 161, glutamate 166, aspartate 199, aspartate 201, asparagine 203, tyrosine 205, and glutamate 210 each contribute to the Ca(2+) site.

This sequence belongs to the calbindin family. Interacts with RANBP9.

Buffers cytosolic calcium. May stimulate a membrane Ca(2+)-ATPase and a 3',5'-cyclic nucleotide phosphodiesterase. This is Calbindin (CALB1) from Pongo abelii (Sumatran orangutan).